The following is a 343-amino-acid chain: Branched-chain-amino-acid aminotransferase (343 aa).

Lysine 182 carries the post-translational modification N6-(pyridoxal phosphate)lysine.

Belongs to the class-IV pyridoxal-phosphate-dependent aminotransferase family. Pyridoxal 5'-phosphate is required as a cofactor.

It carries out the reaction L-leucine + 2-oxoglutarate = 4-methyl-2-oxopentanoate + L-glutamate. The enzyme catalyses L-isoleucine + 2-oxoglutarate = (S)-3-methyl-2-oxopentanoate + L-glutamate. The catalysed reaction is L-valine + 2-oxoglutarate = 3-methyl-2-oxobutanoate + L-glutamate. It participates in amino-acid biosynthesis; L-isoleucine biosynthesis; L-isoleucine from 2-oxobutanoate: step 4/4. Its pathway is amino-acid biosynthesis; L-leucine biosynthesis; L-leucine from 3-methyl-2-oxobutanoate: step 4/4. The protein operates within amino-acid biosynthesis; L-valine biosynthesis; L-valine from pyruvate: step 4/4. In terms of biological role, acts on leucine, isoleucine and valine. In Haemophilus influenzae (strain ATCC 51907 / DSM 11121 / KW20 / Rd), this protein is Branched-chain-amino-acid aminotransferase (ilvE).